The chain runs to 364 residues: Phosphoserine aminotransferase (364 aa).

R46 contributes to the L-glutamate binding site. Pyridoxal 5'-phosphate is bound by residues 80–81 (AR), W106, T157, D176, and Q199. Position 200 is an N6-(pyridoxal phosphate)lysine (K200). Pyridoxal 5'-phosphate is bound at residue 241-242 (NT).

This sequence belongs to the class-V pyridoxal-phosphate-dependent aminotransferase family. SerC subfamily. In terms of assembly, homodimer. The cofactor is pyridoxal 5'-phosphate.

The protein localises to the cytoplasm. The enzyme catalyses O-phospho-L-serine + 2-oxoglutarate = 3-phosphooxypyruvate + L-glutamate. The catalysed reaction is 4-(phosphooxy)-L-threonine + 2-oxoglutarate = (R)-3-hydroxy-2-oxo-4-phosphooxybutanoate + L-glutamate. It functions in the pathway amino-acid biosynthesis; L-serine biosynthesis; L-serine from 3-phospho-D-glycerate: step 2/3. The protein operates within cofactor biosynthesis; pyridoxine 5'-phosphate biosynthesis; pyridoxine 5'-phosphate from D-erythrose 4-phosphate: step 3/5. Catalyzes the reversible conversion of 3-phosphohydroxypyruvate to phosphoserine and of 3-hydroxy-2-oxo-4-phosphonooxybutanoate to phosphohydroxythreonine. This Vibrio vulnificus (strain CMCP6) protein is Phosphoserine aminotransferase.